The primary structure comprises 885 residues: DNA mismatch repair protein MutS (885 aa).

Residue 626-633 (GPNMGGKS) coordinates ATP.

The protein belongs to the DNA mismatch repair MutS family.

Functionally, this protein is involved in the repair of mismatches in DNA. It is possible that it carries out the mismatch recognition step. This protein has a weak ATPase activity. The chain is DNA mismatch repair protein MutS from Burkholderia cenocepacia (strain ATCC BAA-245 / DSM 16553 / LMG 16656 / NCTC 13227 / J2315 / CF5610) (Burkholderia cepacia (strain J2315)).